The chain runs to 157 residues: Transcription elongation factor GreA (157 aa).

It belongs to the GreA/GreB family.

In terms of biological role, necessary for efficient RNA polymerase transcription elongation past template-encoded arresting sites. The arresting sites in DNA have the property of trapping a certain fraction of elongating RNA polymerases that pass through, resulting in locked ternary complexes. Cleavage of the nascent transcript by cleavage factors such as GreA or GreB allows the resumption of elongation from the new 3'terminus. GreA releases sequences of 2 to 3 nucleotides. The chain is Transcription elongation factor GreA from Phenylobacterium zucineum (strain HLK1).